The primary structure comprises 415 residues: Homoserine O-acetyltransferase (415 aa).

The AB hydrolase-1 domain occupies 47-369; the sequence is NAVLVCHGLT…HGHDAFLVEP (323 aa). The active-site Nucleophile is Ser155. Arg226 is a binding site for substrate. Catalysis depends on residues Asp329 and His362. Substrate is bound at residue Asp363. The segment at 387-415 is disordered; the sequence is RAVTDTATDGGEPDEEEDFAPVHSSLFSR.

The protein belongs to the AB hydrolase superfamily. MetX family. Homodimer.

It localises to the cytoplasm. It catalyses the reaction L-homoserine + acetyl-CoA = O-acetyl-L-homoserine + CoA. The protein operates within amino-acid biosynthesis; L-methionine biosynthesis via de novo pathway; O-acetyl-L-homoserine from L-homoserine: step 1/1. Functionally, transfers an acetyl group from acetyl-CoA to L-homoserine, forming acetyl-L-homoserine. The chain is Homoserine O-acetyltransferase from Haloferax prahovense (strain DSM 18310 / JCM 13924 / TL6).